We begin with the raw amino-acid sequence, 710 residues long: DNA-directed RNA polymerase III subunit RPC5 (710 aa).

Positions 146–155 are enriched in basic and acidic residues; it reads DAKHREREAA. Positions 146 to 169 are disordered; the sequence is DAKHREREAANEAGDSSQDEAEED. A phosphoserine mark is found at serine 161 and serine 162. A Glycyl lysine isopeptide (Lys-Gly) (interchain with G-Cter in SUMO2) cross-link involves residue lysine 171. Serine 192 carries the phosphoserine modification. Position 224 is a phosphotyrosine (tyrosine 224). Lysine 432 participates in a covalent cross-link: Glycyl lysine isopeptide (Lys-Gly) (interchain with G-Cter in SUMO2). Lysine 498 participates in a covalent cross-link: Glycyl lysine isopeptide (Lys-Gly) (interchain with G-Cter in SUMO1); alternate. Residue lysine 498 forms a Glycyl lysine isopeptide (Lys-Gly) (interchain with G-Cter in SUMO2); alternate linkage. The disordered stretch occupies residues 498–526; sequence KEEPLSEEEADGAELEAEEEEPMDTAPST. The segment covering 502-520 has biased composition (acidic residues); that stretch reads LSEEEADGAELEAEEEEPM. Phosphoserine is present on serine 503. The required for Pol III complex stability stretch occupies residues 558 to 710; it reads NPVACELKAF…MWYLKGTVQS (153 aa). Lysine 661 participates in a covalent cross-link: Glycyl lysine isopeptide (Lys-Gly) (interchain with G-Cter in SUMO2).

Component of the RNA polymerase III complex consisting of at least 17 subunits: a ten-subunit horseshoe-shaped catalytic core composed of POLR3A/RPC1, POLR3B/RPC2, POLR1C/RPAC1, POLR1D/RPAC2, POLR3K/RPC10, POLR2E/RPABC1, POLR2F/RPABC2, POLR2H/RPABC3, POLR2K/RPABC4 and POLR2L/RPABC5; the stalk composed of two subunits POLR3H/RPC8 and CRCP/RPC9, forming a structural mobile part that protrudes out of the core and functions primarily in transcription initiation; and additional subunits homologous to general transcription factors of the RNA polymerase II machinery, POLR3D/RPC4-POLR3E/RPC5 heterodimer and POLR3/CRPC3-POLR3F/RPC6-POLR3G/RPC7 heterotrimer.

It is found in the nucleus. DNA-dependent RNA polymerase catalyzes the transcription of DNA into RNA using the four ribonucleoside triphosphates as substrates. Specific peripheric component of RNA polymerase III (Pol III) which synthesizes small non-coding RNAs including 5S rRNA, snRNAs, tRNAs and miRNAs from at least 500 distinct genomic loci. Assembles with POLR3D/RPC4 forming a subcomplex that binds the Pol III core. Enables recruitment of Pol III at transcription initiation site and drives transcription initiation from both type 2 and type 3 DNA promoters. Required for efficient transcription termination and reinitiation. Plays a key role in sensing and limiting infection by intracellular bacteria and DNA viruses. Acts as a nuclear and cytosolic DNA sensor involved in innate immune response. Can sense non-self dsDNA that serves as template for transcription into dsRNA. The non-self RNA polymerase III transcripts, such as Epstein-Barr virus-encoded RNAs (EBERs) induce type I interferon and NF-kappa-B through the RIG-I pathway. This Mus musculus (Mouse) protein is DNA-directed RNA polymerase III subunit RPC5.